Consider the following 139-residue polypeptide: Actin-depolymerizing factor (139 aa).

In terms of domain architecture, ADF-H spans S5 to F139.

It belongs to the actin-binding proteins ADF family. As to expression, preferentially in mature anther.

In terms of biological role, actin-depolymerizing protein. Severs actin filaments (F-actin) and binds to actin monomers. This Lilium longiflorum (Trumpet lily) protein is Actin-depolymerizing factor.